We begin with the raw amino-acid sequence, 235 residues long: Purine nucleoside phosphorylase DeoD-type (235 aa).

His4 serves as a coordination point for a purine D-ribonucleoside. Phosphate contacts are provided by residues Gly20, Arg24, Arg43, and 87–90; that span reads RVGT. A purine D-ribonucleoside contacts are provided by residues Glu162, 179–181, and 203–204; these read EME and SD. The active-site Proton donor is the Asp204.

This sequence belongs to the PNP/UDP phosphorylase family. In terms of assembly, homohexamer; trimer of homodimers.

It carries out the reaction a purine D-ribonucleoside + phosphate = a purine nucleobase + alpha-D-ribose 1-phosphate. It catalyses the reaction a purine 2'-deoxy-D-ribonucleoside + phosphate = a purine nucleobase + 2-deoxy-alpha-D-ribose 1-phosphate. In terms of biological role, catalyzes the reversible phosphorolytic breakdown of the N-glycosidic bond in the beta-(deoxy)ribonucleoside molecules, with the formation of the corresponding free purine bases and pentose-1-phosphate. The polypeptide is Purine nucleoside phosphorylase DeoD-type (Bacillus cereus (strain ATCC 14579 / DSM 31 / CCUG 7414 / JCM 2152 / NBRC 15305 / NCIMB 9373 / NCTC 2599 / NRRL B-3711)).